The following is a 125-amino-acid chain: MGKRCPCGTGLTYGECCYRFHSGEWVAPTAEALMRSRFTAFAVGNSQYLLDTWDPETRPSELGLDMGIDFYRLDILETTGGGPFDSTGTVKFQAFYKGLASGVQEEDSTFRKVNGAWVYSTGDVD.

Belongs to the UPF0225 family.

This Corynebacterium glutamicum (strain ATCC 13032 / DSM 20300 / JCM 1318 / BCRC 11384 / CCUG 27702 / LMG 3730 / NBRC 12168 / NCIMB 10025 / NRRL B-2784 / 534) protein is UPF0225 protein Cgl1438/cg1626.